The chain runs to 362 residues: 3-isopropylmalate dehydrogenase (362 aa).

Residue 77–88 coordinates NAD(+); it reads GPKWGTGAVRPE. 4 residues coordinate substrate: arginine 95, arginine 105, arginine 134, and aspartate 223. Mg(2+)-binding residues include aspartate 223, aspartate 248, and aspartate 252. Position 287–298 (287–298) interacts with NAD(+); that stretch reads GSAPDLPKGKVN.

Belongs to the isocitrate and isopropylmalate dehydrogenases family. In terms of assembly, homodimer. The cofactor is Mg(2+). Requires Mn(2+) as cofactor.

It localises to the cytoplasm. The enzyme catalyses (2R,3S)-3-isopropylmalate + NAD(+) = 4-methyl-2-oxopentanoate + CO2 + NADH. The protein operates within amino-acid biosynthesis; L-leucine biosynthesis; L-leucine from 3-methyl-2-oxobutanoate: step 3/4. Catalyzes the oxidation of 3-carboxy-2-hydroxy-4-methylpentanoate (3-isopropylmalate) to 3-carboxy-4-methyl-2-oxopentanoate. The product decarboxylates to 4-methyl-2 oxopentanoate. In Zygosaccharomyces bailii, this protein is 3-isopropylmalate dehydrogenase (LEU2).